The chain runs to 238 residues: Ribonuclease PH (238 aa).

Phosphate contacts are provided by residues Arg-86 and 124 to 126 (GTR).

The protein belongs to the RNase PH family. Homohexameric ring arranged as a trimer of dimers.

It carries out the reaction tRNA(n+1) + phosphate = tRNA(n) + a ribonucleoside 5'-diphosphate. Functionally, phosphorolytic 3'-5' exoribonuclease that plays an important role in tRNA 3'-end maturation. Removes nucleotide residues following the 3'-CCA terminus of tRNAs; can also add nucleotides to the ends of RNA molecules by using nucleoside diphosphates as substrates, but this may not be physiologically important. Probably plays a role in initiation of 16S rRNA degradation (leading to ribosome degradation) during starvation. The sequence is that of Ribonuclease PH from Aliivibrio fischeri (strain ATCC 700601 / ES114) (Vibrio fischeri).